The following is a 147-amino-acid chain: Cytochrome c-type biogenesis protein CcmE (147 aa).

Residues 1–9 (MKNLKKQRR) are Cytoplasmic-facing. Residues 10–30 (IQVIALATVALVLSTALIGYA) traverse the membrane as a helical; Signal-anchor for type II membrane protein segment. Residues 31-147 (MRDGINFFRA…EQGVYKGTEG (117 aa)) are Periplasmic-facing. Heme is bound by residues His123 and Tyr127.

It belongs to the CcmE/CycJ family.

It localises to the cell inner membrane. Functionally, heme chaperone required for the biogenesis of c-type cytochromes. Transiently binds heme delivered by CcmC and transfers the heme to apo-cytochromes in a process facilitated by CcmF and CcmH. This Roseobacter denitrificans (strain ATCC 33942 / OCh 114) (Erythrobacter sp. (strain OCh 114)) protein is Cytochrome c-type biogenesis protein CcmE.